The following is a 390-amino-acid chain: Lipoyl synthase, mitochondrial (390 aa).

A mitochondrion-targeting transit peptide spans 1 to 18 (MALYRAPKLQRSLLNRCL). [4Fe-4S] cluster-binding residues include C99, C104, C110, C137, C141, C144, and S351. Residues 120–340 (AEGRSAATAT…KQVAEDLGFL (221 aa)) enclose the Radical SAM core domain.

It belongs to the radical SAM superfamily. Lipoyl synthase family. Requires [4Fe-4S] cluster as cofactor.

Its subcellular location is the mitochondrion. The catalysed reaction is [[Fe-S] cluster scaffold protein carrying a second [4Fe-4S](2+) cluster] + N(6)-octanoyl-L-lysyl-[protein] + 2 oxidized [2Fe-2S]-[ferredoxin] + 2 S-adenosyl-L-methionine + 4 H(+) = [[Fe-S] cluster scaffold protein] + N(6)-[(R)-dihydrolipoyl]-L-lysyl-[protein] + 4 Fe(3+) + 2 hydrogen sulfide + 2 5'-deoxyadenosine + 2 L-methionine + 2 reduced [2Fe-2S]-[ferredoxin]. It participates in protein modification; protein lipoylation via endogenous pathway; protein N(6)-(lipoyl)lysine from octanoyl-[acyl-carrier-protein]: step 2/2. Functionally, catalyzes the radical-mediated insertion of two sulfur atoms into the C-6 and C-8 positions of the octanoyl moiety bound to the lipoyl domains of lipoate-dependent enzymes, thereby converting the octanoylated domains into lipoylated derivatives. This chain is Lipoyl synthase, mitochondrial, found in Coprinopsis cinerea (strain Okayama-7 / 130 / ATCC MYA-4618 / FGSC 9003) (Inky cap fungus).